A 150-amino-acid chain; its full sequence is Protein E6 (150 aa).

Zinc fingers lie at residues 31-67 (CVFCKNALTTAEIYSYAYKHLKVLFRGGYPYAACACC) and 104-140 (CYLCHKPLCEVEKVKHILTKARFIKLNCTWKGRCLHC).

This sequence belongs to the papillomaviridae E6 protein family. Forms homodimers. Interacts with ubiquitin-protein ligase UBE3A/E6-AP; this interaction stimulates UBE3A ubiquitin activity. Interacts with host TP53 and EP300; this interaction inhibits TP53 activity. Interacts with human zyxin.

It is found in the host cytoplasm. It localises to the host nucleus. Plays a major role in the induction and maintenance of cellular transformation. E6 associates with host UBE3A/E6-AP ubiquitin-protein ligase and modulates its activity. Sequesters tumor suppressor TP53 in the host cytoplasm and modulates its activity by interacting with host EP300 that results in the reduction of TP53 acetylation and activation. In turn, apoptosis induced by DNA damage is inhibited. E6 also protects host keratinocytes from apoptosis by mediating the degradation of host BAK1. May also inhibit host immune response. The chain is Protein E6 from Human papillomavirus type 6b.